Consider the following 981-residue polypeptide: Anoctamin-3 (981 aa).

Residues 1–28 (MVHHSGSIQSFKQQKGMNISKSEITTEA) show a composition bias toward polar residues. Disordered stretches follow at residues 1–32 (MVHH…SLKP) and 67–87 (PTSV…EESR). Residues 1 to 403 (MVHHSGSIQS…LYFAWLGWYT (403 aa)) lie on the Cytoplasmic side of the membrane. Basic and acidic residues predominate over residues 76–87 (DKPEHVTSEESR). A helical transmembrane segment spans residues 404 to 424 (GMLIPAAVVGLCVFFYGLVTM). 3 N-linked (GlcNAc...) asparagine glycosylation sites follow: Asn-425, Asn-448, and Asn-455. The Extracellular portion of the chain corresponds to 425 to 469 (NESQVSQEICKATEVFMCPLCDKNCSLQRLNDSCIYAKVTYLFDN). The chain crosses the membrane as a helical span at residues 470-490 (GGTVFFAIFMAIWATVFLEFW). Topologically, residues 491-550 (KRRRSILTYTWDLIEWEEEEETLRPQFEAKYYRMEVINPITGKPEPHQPSSDKVTRLLVS) are cytoplasmic. Residues 551-571 (VSGIFFMISLVITAVFAVVVY) traverse the membrane as a helical segment. Topologically, residues 572-592 (RLVVMEQFASFKWNFVKQHWQ) are extracellular. The chain crosses the membrane as a helical span at residues 593-613 (FATSGAAVCINFIIIMLLNLA). Over 614–640 (YEKIAYLLTNLEYPRTESEWENSFALK) the chain is Cytoplasmic. A helical transmembrane segment spans residues 641-661 (MFLFQFVNLNSSIFYIAFFLG). Residues 662-761 (RFVGHPGKYN…MDEYLEMVLQ (100 aa)) are Extracellular-facing. The chain crosses the membrane as a helical span at residues 762-782 (FGFTTIFVAAFPLAPLLALLN). The Cytoplasmic portion of the chain corresponds to 783-810 (NIIEIRLDAYKFVTQWRRPLPARATDIG). A helical transmembrane segment spans residues 811 to 831 (IWLGILEGIGILAVITNAFVI). Residues 832 to 914 (AITSDYIPRF…QYWHILAARL (83 aa)) are Extracellular-facing. An N-linked (GlcNAc...) asparagine glycan is attached at Asn-866. The chain crosses the membrane as a helical span at residues 915–935 (AFIIVFEHLVFGIKSFIAYLI). Residues 936 to 981 (PDIPKGLRERIRREKYLVQEMMYEAELEHLQQQRRKSGQPIHHEWP) lie on the Cytoplasmic side of the membrane.

Belongs to the anoctamin family. Interacts with KCNT1/Slack. In terms of tissue distribution, predominantly expressed in neuronal tissues. Expressed in brain.

The protein localises to the cell membrane. It carries out the reaction a 1,2-diacyl-sn-glycero-3-phosphocholine(in) = a 1,2-diacyl-sn-glycero-3-phosphocholine(out). The enzyme catalyses a beta-D-galactosyl-(1&lt;-&gt;1')-N-acylsphing-4-enine(out) = a beta-D-galactosyl-(1&lt;-&gt;1')-N-acylsphing-4-enine(in). Has calcium-dependent phospholipid scramblase activity; scrambles phosphatidylcholine and galactosylceramide. Does not exhibit calcium-activated chloride channel (CaCC) activity. Seems to act as potassium channel regulator and may inhibit pain signaling; can facilitate KCNT1/Slack channel activity by promoting its full single-channel conductance at very low sodium concentrations and by increasing its sodium sensitivity. The chain is Anoctamin-3 from Mus musculus (Mouse).